Here is a 389-residue protein sequence, read N- to C-terminus: Alkanesulfonate monooxygenase (389 aa).

It belongs to the SsuD family.

It carries out the reaction an alkanesulfonate + FMNH2 + O2 = an aldehyde + FMN + sulfite + H2O + 2 H(+). Catalyzes the desulfonation of aliphatic sulfonates. This chain is Alkanesulfonate monooxygenase, found in Rhizobium etli (strain CIAT 652).